The primary structure comprises 83 residues: MQNDAGEFVDLYVPRKCSASNRIIGAKDHASIQINIAEVDKVTGRFNSQYKTYAICGAIRRMGESDDSILRLAKNDCIVSKNF.

This sequence belongs to the eukaryotic ribosomal protein eS21 family. Component of the 40S small ribosomal subunit.

It localises to the cytoplasm. It is found in the cytosol. Its subcellular location is the rough endoplasmic reticulum. Component of the small ribosomal subunit. The ribosome is a large ribonucleoprotein complex responsible for the synthesis of proteins in the cell. The protein is Small ribosomal subunit protein eS21 (rps21) of Xenopus tropicalis (Western clawed frog).